We begin with the raw amino-acid sequence, 220 residues long: HTH-type transcriptional repressor KstR (220 aa).

Positions 36-96 (RERRKRILDA…SALGREFSRI (61 aa)) constitute an HTH tetR-type domain. The segment at residues 59–78 (QMRAVADRADVAVGTLYRYF) is a DNA-binding region (H-T-H motif).

In terms of assembly, homodimer.

Controls the expression of genes used for utilizing diverse lipids as energy sources. This Mycobacterium tuberculosis (strain ATCC 25618 / H37Rv) protein is HTH-type transcriptional repressor KstR (kstR).